Reading from the N-terminus, the 362-residue chain is Metacaspase-3 (362 aa).

Residues H174 and C230 contribute to the active site.

Belongs to the peptidase C14B family.

This Arabidopsis thaliana (Mouse-ear cress) protein is Metacaspase-3 (AMC3).